The primary structure comprises 477 residues: Solute carrier family 2, facilitated glucose transporter member 8 (477 aa).

At 1–25 (MSPEDPQETQPLLRPPEARTPRGRR) the chain is on the cytoplasmic side. The Dileucine internalization motif signature appears at 12 to 13 (LL). The chain crosses the membrane as a helical span at residues 26 to 46 (VFLASFAAALGPLSFGFALGY). Over 47–70 (SSPAIPSLRRTAPPALRLGDNAAS) the chain is Extracellular. Residues 71–91 (WFGAVVTLGAAAGGILGGWLL) form a helical membrane-spanning segment. The Cytoplasmic portion of the chain corresponds to 92-96 (DRAGR). The chain crosses the membrane as a helical span at residues 97 to 117 (KLSLLLCTVPFVTGFAVITAA). Topologically, residues 118–127 (RDVWMLLGGR) are extracellular. A helical transmembrane segment spans residues 128–148 (LLTGLACGVASLVAPVYISEI). Topologically, residues 149–156 (AYPAVRGL) are cytoplasmic. Residues 157–177 (LGSCVQLMVVTGILLAYVAGW) traverse the membrane as a helical segment. Gln-162 lines the D-glucose pocket. The Extracellular portion of the chain corresponds to 178–182 (VLEWR). Residues 183-203 (WLAVLGCVPPTLMLLLMCYMP) traverse the membrane as a helical segment. The Cytoplasmic portion of the chain corresponds to 204–257 (ETPRFLLTQHQYQEAMAALRFLWGSEEGWEEPPVGAEHQGFQLALLRRPGIYKP). The chain crosses the membrane as a helical span at residues 258–278 (LIIGISLMVFQQLSGVNAIMF). D-glucose contacts are provided by residues 268–269 (QQ) and Asn-274. Topologically, residues 279–293 (YANSIFEEAKFKDSS) are extracellular. A helical membrane pass occupies residues 294-314 (LASVTVGIIQVLFTAVAALIM). Topologically, residues 315-320 (DRAGRR) are cytoplasmic. The chain crosses the membrane as a helical span at residues 321–341 (LLLALSGVIMVFSMSAFGTYF). At 342-367 (KLTQSLPSNSSHVGLVPIAAEPVDVQ) the chain is on the extracellular side. N-linked (GlcNAc...) asparagine glycosylation occurs at Asn-350. The chain crosses the membrane as a helical span at residues 368–388 (VGLAWLAVGSMCLFIAGFAVG). Residues 389–404 (WGPIPWLLMSEIFPLH) lie on the Cytoplasmic side of the membrane. Trp-394 is a D-glucose binding site. Residues 405 to 425 (VKGVATGICVLTNWFMAFLVT) traverse the membrane as a helical segment. Over 426-438 (KEFSSVMEMLRPY) the chain is Extracellular. The chain crosses the membrane as a helical span at residues 439–459 (GAFWLTAAFCALSVLFTLTVV). The Cytoplasmic portion of the chain corresponds to 460–477 (PETKGRTLEQVTAHFEGR).

Belongs to the major facilitator superfamily. Sugar transporter (TC 2.A.1.1) family. Glucose transporter subfamily. Interacts with AP2B1. Also able to mediate the transport of dehydroascorbate. Highest level of expression in placenta and testis. Highly expressed in adult and pubertal testis, but not prepubertal testis. Lower levels of expression in brain, liver, heart, kidney, fat and skeletal muscle.

The protein localises to the cell membrane. It is found in the cytoplasmic vesicle membrane. It catalyses the reaction D-glucose(out) = D-glucose(in). The catalysed reaction is D-fructose(out) = D-fructose(in). It carries out the reaction L-dehydroascorbate(out) = L-dehydroascorbate(in). The enzyme catalyses alpha,alpha-trehalose(in) = alpha,alpha-trehalose(out). Its activity is regulated as follows. Inhibited by cytochalasin B. Functionally, insulin-regulated facilitative hexose transporter that mediates the transport of glucose and fructose. Facilitates hepatic influx of dietary trehalose, which in turn inhibits glucose and fructose influx triggering a starvation signal and hepatic autophagy through activation of AMPK and ULK1. Also able to mediate the transport of dehydroascorbate. The sequence is that of Solute carrier family 2, facilitated glucose transporter member 8 from Mus musculus (Mouse).